We begin with the raw amino-acid sequence, 129 residues long: MSTIPADLKYASSHEWIRKESDGSYTVGITEHAQELLGDMVFVELPEVGDTVTAGEDCAVAESVKAASDIYAPISGEVIAVNESLEDSPELVNSDAFGDGWFFRVMPSDESEVDALLDADGYQEVIDEE.

Positions 24–106 (SYTVGITEHA…FGDGWFFRVM (83 aa)) constitute a Lipoyl-binding domain. Lysine 65 is subject to N6-lipoyllysine.

It belongs to the GcvH family. As to quaternary structure, the glycine cleavage system is composed of four proteins: P, T, L and H. (R)-lipoate is required as a cofactor.

Its function is as follows. The glycine cleavage system catalyzes the degradation of glycine. The H protein shuttles the methylamine group of glycine from the P protein to the T protein. In Shewanella frigidimarina (strain NCIMB 400), this protein is Glycine cleavage system H protein.